The sequence spans 259 residues: 3-deoxy-manno-octulosonate cytidylyltransferase (259 aa).

It belongs to the KdsB family.

It localises to the cytoplasm. The enzyme catalyses 3-deoxy-alpha-D-manno-oct-2-ulosonate + CTP = CMP-3-deoxy-beta-D-manno-octulosonate + diphosphate. It functions in the pathway nucleotide-sugar biosynthesis; CMP-3-deoxy-D-manno-octulosonate biosynthesis; CMP-3-deoxy-D-manno-octulosonate from 3-deoxy-D-manno-octulosonate and CTP: step 1/1. It participates in bacterial outer membrane biogenesis; lipopolysaccharide biosynthesis. Functionally, activates KDO (a required 8-carbon sugar) for incorporation into bacterial lipopolysaccharide in Gram-negative bacteria. The chain is 3-deoxy-manno-octulosonate cytidylyltransferase from Nitrosococcus oceani (strain ATCC 19707 / BCRC 17464 / JCM 30415 / NCIMB 11848 / C-107).